The primary structure comprises 612 residues: MEQYEFLEQIGKGSFGSALLVRHKHEKKKYVLKKIRLARQTQRTRRSAHQEMELISKMRHPFIVEYKDSWVEKACYVCIVIGYCEGGDMAQAIKKSNGVHFQEEKLCKWLVQLLMGLEYLHSNHILHRDVKCSNIFLTKEQDIRLGDFGLAKILTSDDLTSSVVGTPSYMCPELLADIPYGSKSDIWSLGCCIYEMAYLKPAFKAFDMQALINKINKTIVSPLPAKYSGPFRGLVKSMLRKNPEVRPSASDLLRHPHLQPYVLDVKLRLNNLRRKTLPPELPSSKRIMKKAHFSEPAVTCPAFGERQHRSLWNDRALNPEAEEDTASSIKCISRRISDLSIESSSKGTLICKQVSSSACKVSKYPLAKSSVTSRRIMETGRRSDHLHPVSGGGTTSKIIPSARRTSLPLTKRATNQEVAAYNPIVGILQNVKSPEYSINEPQVDKIAIFPLAPYEQDIFFTPMQRKTSSKSSSVSDRSITKDKCTVQTHTTWQGIQLNMVDNISDGSSSSDQNATAGASSHTTSSSSRRCRFDPSSYRQRADALEGLLEFSARLLQEGRYDELNVLLKPFGPGKVSPRETAIWIAKSLKENRDKTKMVDLNVSREIPHVGLL.

A Protein kinase domain is found at 4–258 (YEFLEQIGKG…ASDLLRHPHL (255 aa)). ATP contacts are provided by residues 10-18 (IGKGSFGSA) and Lys33. Asp129 acts as the Proton acceptor in catalysis. The span at 503-513 (ISDGSSSSDQN) shows a compositional bias: polar residues. A disordered region spans residues 503–534 (ISDGSSSSDQNATAGASSHTTSSSSRRCRFDP). Residues 514 to 527 (ATAGASSHTTSSSS) are compositionally biased toward low complexity.

It belongs to the protein kinase superfamily. NEK Ser/Thr protein kinase family. NIMA subfamily.

The catalysed reaction is L-seryl-[protein] + ATP = O-phospho-L-seryl-[protein] + ADP + H(+). It catalyses the reaction L-threonyl-[protein] + ATP = O-phospho-L-threonyl-[protein] + ADP + H(+). Its function is as follows. May be involved in plant development processes. This is Serine/threonine-protein kinase Nek1 (NEK1) from Arabidopsis thaliana (Mouse-ear cress).